A 222-amino-acid polypeptide reads, in one-letter code: Latexin (222 aa).

The Cystatin LXN-type 1 domain occupies 1–97 (MEIPPTHYAA…NFTFEGEIGK (97 aa)). N6-acetyllysine is present on Lys-55. The segment at 98–117 (NPDEEDNTFYQSLMSLKRPL) is alpha-helical linker. A Cystatin LXN-type 2 domain is found at 118-222 (EAQDIPDNFG…SRLPKEGQAE (105 aa)).

It belongs to the protease inhibitor I47 (latexin) family. As to expression, highly enriched in macrophages.

The protein resides in the cytoplasm. In terms of biological role, hardly reversible, non-competitive, and potent inhibitor of CPA1, CPA2 and CPA4. May play a role in inflammation. In Mus musculus (Mouse), this protein is Latexin (Lxn).